Reading from the N-terminus, the 347-residue chain is D-alanine--D-alanine ligase (347 aa).

The region spanning 131–333 is the ATP-grasp domain; that stretch reads KRVLESAGIA…YPELIERLVD (203 aa). 161–216 is an ATP binding site; sequence EEKLAYPVFTKPSNMGSSVGISKSENQEELRQALKLAFRYDSRVLVEQGVNAREIE. Mg(2+) is bound by residues D287, E300, and N302.

This sequence belongs to the D-alanine--D-alanine ligase family. The cofactor is Mg(2+). Mn(2+) is required as a cofactor.

Its subcellular location is the cytoplasm. It catalyses the reaction 2 D-alanine + ATP = D-alanyl-D-alanine + ADP + phosphate + H(+). Its pathway is cell wall biogenesis; peptidoglycan biosynthesis. In terms of biological role, cell wall formation. The sequence is that of D-alanine--D-alanine ligase from Streptococcus pneumoniae serotype 19F (strain G54).